The sequence spans 687 residues: Dentin sialophosphoprotein (687 aa).

The N-terminal stretch at 1–17 (MKTKIIIYICIWATAWA) is a signal peptide. The interval 54–113 (NNATNDDSPKGSELGRQVHSNGGYERDRNGSESIAVGGKSSPTQPILANAQGNSAKERED) is disordered. N-linked (GlcNAc...) asparagine glycosylation occurs at asparagine 55. Threonine 57 carries the phosphothreonine; by CK2 modification. N-linked (GlcNAc...) asparagine glycosylation occurs at asparagine 82. A compositionally biased stretch (polar residues) spans 93-107 (SSPTQPILANAQGNS). The N-linked (GlcNAc...) asparagine glycan is linked to asparagine 128. Basic and acidic residues predominate over residues 146 to 160 (EAKESKVHGQPHQDT). The segment at 146-687 (EAKESKVHGQ…SDSNHSTSDD (542 aa)) is disordered. Over residues 161-194 (KTGLASDTSQNGDATLVQENEPQVAGSKNSTNHE) the composition is skewed to polar residues. The N-linked (GlcNAc...) asparagine glycan is linked to asparagine 189. Position 226 is a phosphoserine; by CK2 (serine 226). Serine 253 is subject to Phosphoserine; by CK1. Basic and acidic residues predominate over residues 262-275 (GDGRESHDGTEGHE). Polar residues predominate over residues 276 to 292 (GQSSGGNNDNRGQGSVS). At serine 278 the chain carries Phosphoserine; by CK1. Serine 292 bears the Phosphoserine; by CK2 mark. A Phosphoserine; by CK1 modification is found at serine 298. A glycan (N-linked (GlcNAc...) asparagine) is linked at asparagine 312. Position 315 is a phosphoserine; by CK2 (serine 315). Phosphothreonine; by CK2 is present on residues threonine 319 and threonine 329. Phosphoserine; by CK2 is present on residues serine 337 and serine 345. Over residues 352 to 375 (SGQSQNQGLETEGSSTGNKSSITK) the composition is skewed to polar residues. Serine 366 carries the post-translational modification Phosphoserine; by CK1. A glycan (N-linked (GlcNAc...) asparagine) is linked at asparagine 369. The segment covering 386–417 (SNGHHGMELDKRNSPKQGESDKPQGAAEKSDT) has biased composition (basic and acidic residues). Polar residues predominate over residues 418 to 432 (HNNMGHSRIGSSSNS). Residues 447 to 460 (GDDPNSSDESNGSD) show a composition bias toward low complexity. Over residues 500–521 (DDSSDDTSDTDDSDSNGDDDSE) the composition is skewed to acidic residues. Positions 522-545 (SKDKDESDNSNHDNDSDSESKSDS) are enriched in basic and acidic residues. Low complexity predominate over residues 555–598 (SSDSSDSSDSSETSDSSDSSDTSDSSDSSDSSDSSNSSDTSDSS). A compositionally biased stretch (acidic residues) spans 599-617 (DSSDGDSSDGDSSDSDSSD). A compositionally biased stretch (low complexity) spans 618–639 (SDSSNSSDSDSSDSSDSSSSDS). The segment covering 667-677 (SDSDSDSDSEG) has biased composition (acidic residues). The span at 678–687 (SDSNHSTSDD) shows a compositional bias: low complexity.

Interacts with FBLN7. Post-translationally, DSP is glycosylated. In terms of tissue distribution, specifically expressed in teeth, mainly in odontoblasts and transiently in pre-ameloblasts.

The protein localises to the secreted. The protein resides in the extracellular space. It localises to the extracellular matrix. DSP may be an important factor in dentinogenesis. DPP may bind high amount of calcium and facilitate initial mineralization of dentin matrix collagen as well as regulate the size and shape of the crystals. This chain is Dentin sialophosphoprotein (Dspp), found in Rattus norvegicus (Rat).